The sequence spans 651 residues: NADH oxidase (651 aa).

Gln104 is an FMN binding site. Catalysis depends on Tyr175, which acts as the Proton donor. Residues Arg223 and 320 to 321 (GR) contribute to the FMN site. Residues Cys344, Cys347, Cys351, and Cys364 each coordinate [4Fe-4S] cluster. FAD-binding residues include Ala396, Glu415, Gln423, Lys433, and Ala460.

The protein in the N-terminal section; belongs to the NADH:flavin oxidoreductase/NADH oxidase family. Homohexamer. It depends on FMN as a cofactor. The cofactor is FAD. [4Fe-4S] cluster is required as a cofactor. The N-terminus is blocked.

It catalyses the reaction A + NADH + H(+) = AH2 + NAD(+). In terms of biological role, reduces a range of alternative electron acceptors. In Thermoanaerobacter brockii (Thermoanaerobium brockii), this protein is NADH oxidase.